A 397-amino-acid chain; its full sequence is Protein RecA (397 aa).

The interval 1–23 (MALETKPAKDPAAEDKHELDPKR) is disordered. Residue 83–90 (GPESSGKT) participates in ATP binding.

This sequence belongs to the RecA family.

Its subcellular location is the cytoplasm. Its function is as follows. Can catalyze the hydrolysis of ATP in the presence of single-stranded DNA, the ATP-dependent uptake of single-stranded DNA by duplex DNA, and the ATP-dependent hybridization of homologous single-stranded DNAs. It interacts with LexA causing its activation and leading to its autocatalytic cleavage. This Bifidobacterium longum (strain NCC 2705) protein is Protein RecA.